The following is a 287-amino-acid chain: Bifunctional protein FolD 2 (287 aa).

Residues 166 to 168 (GAS) and Ile-232 contribute to the NADP(+) site.

This sequence belongs to the tetrahydrofolate dehydrogenase/cyclohydrolase family. As to quaternary structure, homodimer.

It catalyses the reaction (6R)-5,10-methylene-5,6,7,8-tetrahydrofolate + NADP(+) = (6R)-5,10-methenyltetrahydrofolate + NADPH. The enzyme catalyses (6R)-5,10-methenyltetrahydrofolate + H2O = (6R)-10-formyltetrahydrofolate + H(+). It participates in one-carbon metabolism; tetrahydrofolate interconversion. Functionally, catalyzes the oxidation of 5,10-methylenetetrahydrofolate to 5,10-methenyltetrahydrofolate and then the hydrolysis of 5,10-methenyltetrahydrofolate to 10-formyltetrahydrofolate. This is Bifunctional protein FolD 2 from Hydrogenovibrio crunogenus (strain DSM 25203 / XCL-2) (Thiomicrospira crunogena).